A 228-amino-acid chain; its full sequence is Eukaryotic translation initiation factor 4E-1 (228 aa).

EIF4G-binding regions lie at residues 53-56 and 63-99; these read HLLE and FDTPAAKSKQDDWGSSMRPIYTFSTVEEFWSIYNNIH. MRNA is bound by residues 71–76, Lys-103, and 121–122; these read KQDDWG and WE. Cys-126 and Cys-164 are joined by a disulfide. Residues 147 to 156 are EIF4G-binding; sequence YTLLAMIGEQ. MRNA-binding positions include 171 to 176 and 216 to 220; these read RGRAEK and RKLDR.

This sequence belongs to the eukaryotic initiation factor 4E family. As to quaternary structure, EIF4F is a multi-subunit complex, the composition of which varies with external and internal environmental conditions. It is composed of at least EIF4A, EIF4E and EIF4G. EIF4E is also known to interact with other partners. In higher plants two isoforms of EIF4F have been identified, named isoform EIF4F and isoform EIF(iso)4F. Isoform EIF4F has subunits p220 and p26, whereas isoform EIF(iso)4F has subunits p82 and p28. (Microbial infection) Interacts with potyvirus viral genome-linked protein (VPg); this interaction is possible in susceptible hosts but impaired in resistant plants. In terms of processing, according to the redox status, the Cys-126-Cys-164 disulfide bridge may have a role in regulating protein function by affecting its ability to bind capped mRNA.

It localises to the nucleus. The protein resides in the cytoplasm. Component of the protein complex eIF4F, which is involved in the recognition of the mRNA cap, ATP-dependent unwinding of 5'-terminal secondary structure and recruitment of mRNA to the ribosome. Recognizes and binds the 7-methylguanosine-containing mRNA cap during an early step in the initiation of protein synthesis and facilitates ribosome binding by inducing the unwinding of the mRNAs secondary structures. Key component of recessive resistance to potyviruses. Its function is as follows. (Microbial infection) Susceptibility host factor required for viral infection by recruiting viral RNAs to the host ribosomal complex via an interaction with viral genome-linked protein (VPg). Also seems to be involved in virus movement from cell-to-cell. The polypeptide is Eukaryotic translation initiation factor 4E-1 (Pisum sativum (Garden pea)).